The following is a 142-amino-acid chain: Peptide methionine sulfoxide reductase MsrB (142 aa).

The 124-residue stretch at 2–125 (IKKNKEELND…NSAAIQFIPY (124 aa)) folds into the MsrB domain. Residue C114 is the Nucleophile of the active site.

This sequence belongs to the MsrB Met sulfoxide reductase family.

It catalyses the reaction L-methionyl-[protein] + [thioredoxin]-disulfide + H2O = L-methionyl-(R)-S-oxide-[protein] + [thioredoxin]-dithiol. In Staphylococcus epidermidis (strain ATCC 35984 / DSM 28319 / BCRC 17069 / CCUG 31568 / BM 3577 / RP62A), this protein is Peptide methionine sulfoxide reductase MsrB.